A 448-amino-acid chain; its full sequence is Tryptophan dimethylallyltransferase 2 (448 aa).

L-tryptophan contacts are provided by residues 80–81 (IL) and glutamate 89. 3 residues coordinate substrate: arginine 100, lysine 186, and tyrosine 188. L-tryptophan-binding residues include tyrosine 190 and arginine 249. Substrate is bound by residues arginine 262, lysine 264, tyrosine 266, glutamine 348, tyrosine 350, tyrosine 414, and tyrosine 418.

The protein belongs to the tryptophan dimethylallyltransferase family. Homodimer.

The enzyme catalyses L-tryptophan + dimethylallyl diphosphate = 4-(3-methylbut-2-enyl)-L-tryptophan + diphosphate. It participates in alkaloid biosynthesis; ergot alkaloid biosynthesis. Catalyzes the first step of ergot alkaloid biosynthesis. Ergot alkaloids, which are produced by endophyte fungi, can enhance plant host fitness, but also cause livestock toxicosis to host plants. The chain is Tryptophan dimethylallyltransferase 2 (dmaW2) from Claviceps purpurea (strain 20.1) (Ergot fungus).